The sequence spans 330 residues: MELKFSTFLSLTLLFSSVLNPALSDLCNPDDKKVLLQIKKAFGDPYVLASWKSDTDCCDWYCVTCDSTTNRINSLTIFAGQVSGQIPALVGDLPYLETLEFHKQPNLTGPIQPAIAKLKGLKSLRLSWTNLSGSVPDFLSQLKNLTFLDLSFNNLTGAIPSSLSELPNLGALRLDRNKLTGHIPISFGQFIGNVPDLYLSHNQLSGNIPTSFAQMDFTSIDLSRNKLEGDASVIFGLNKTTQIVDLSRNLLEFNLSKVEFPTSLTSLDINHNKIYGSIPVEFTQLNFQFLNVSYNRLCGQIPVGGKLQSFDEYSYFHNRCLCGAPLPSCK.

A signal peptide spans 1 to 24 (MELKFSTFLSLTLLFSSVLNPALS). Cystine bridges form between C27–C57 and C58–C65. LRR repeat units follow at residues 69 to 92 (TNRI…LVGD), 93 to 118 (LPYL…IAKL), 119 to 141 (KGLK…FLSQ), 142 to 166 (LKNL…LSEL), 167 to 192 (PNLG…QFIG), 194 to 215 (VPDL…FAQM), and 217 to 237 (FTSI…IFGL). N-linked (GlcNAc...) asparagine glycosylation is found at N106, N130, N144, and N154. 2 N-linked (GlcNAc...) asparagine glycosylation sites follow: N238 and N254. LRR repeat units follow at residues 239-261 (KTTQ…VEFP), 262-285 (TSLT…FTQL), and 287-309 (FQFL…KLQS). A glycan (N-linked (GlcNAc...) asparagine) is linked at N291. 2 disulfide bridges follow: C298-C320 and C322-C329.

This sequence belongs to the polygalacturonase-inhibiting protein family. As to quaternary structure, homodimer. N-linked glycosylated. Mostly expressed in fruits, and, to a lower extent, in flowers and leaves.

The protein localises to the secreted. Its subcellular location is the extracellular space. The protein resides in the apoplast. It localises to the cell wall. Its function is as follows. Inhibitor of fungal polygalacturonase. It is an important factor for plant resistance to phytopathogenic fungi. The chain is Polygalacturonase inhibitor (PGIP) from Pyrus communis (Pear).